A 272-amino-acid chain; its full sequence is Streptomycin 3''-kinase (272 aa).

Residue Asp-190 is the Proton acceptor of the active site.

The protein belongs to the aminoglycoside phosphotransferase family.

The catalysed reaction is streptomycin + ATP = streptomycin 3''-phosphate + ADP + H(+). In terms of biological role, the aminoglycoside phosphotransferases achieve inactivation of their antibiotic substrates by phosphorylation. The protein is Streptomycin 3''-kinase (aphE) of Streptomyces griseus.